The primary structure comprises 410 residues: Mating-type locus allele B6 protein (410 aa).

A variable domain between B alleles region spans residues 1–110; that stretch reads MSRDPKLSLS…VNVASPAVEY (110 aa). The homeobox; TALE-type DNA-binding region spans 107-184; that stretch reads AVEYRNLSED…NARRRSGWSH (78 aa). The tract at residues 111–410 is highly conserved between B alleles; sequence RNLSEDLPAY…PFFCLSIAFV (300 aa). 3 disordered regions span residues 202-224, 278-335, and 373-393; these read RAKLSSSNQSTPPSLTSEKPSDD, TPKP…TPEL, and KARGNRKVKALPKRAGKQQPD. Positions 205 to 219 are enriched in polar residues; the sequence is LSSSNQSTPPSLTSE. Positions 276-308 match the Nuclear localization signal motif; that stretch reads KKTPKPGMPRPVTTVAKRQPARKTKPAAKPKSR. The segment covering 294–307 has biased composition (basic residues); it reads QPARKTKPAAKPKS. The segment covering 312–335 has biased composition (polar residues); it reads PRASTTPSIDSTLDSSKLESTPEL. The tract at residues 333–410 is not essential for B6 function; sequence PELSMCSTAD…PFFCLSIAFV (78 aa). A compositionally biased stretch (basic residues) spans 375-388; that stretch reads RGNRKVKALPKRAG.

It belongs to the TALE/M-ATYP homeobox family.

It localises to the nucleus. Its function is as follows. The B locus has at least 25 alleles, and any combination of two different B alleles yields a multimeric regulatory protein, that activates genes responsible for the pathogenicity and for the sexual development of the fungus within the corn plant. This chain is Mating-type locus allele B6 protein, found in Mycosarcoma maydis (Corn smut fungus).